The sequence spans 270 residues: Bis(5'-nucleosyl)-tetraphosphatase, symmetrical (270 aa).

The protein belongs to the Ap4A hydrolase family.

It catalyses the reaction P(1),P(4)-bis(5'-adenosyl) tetraphosphate + H2O = 2 ADP + 2 H(+). In terms of biological role, hydrolyzes diadenosine 5',5'''-P1,P4-tetraphosphate to yield ADP. The chain is Bis(5'-nucleosyl)-tetraphosphatase, symmetrical from Thioalkalivibrio sulfidiphilus (strain HL-EbGR7).